The primary structure comprises 277 residues: Caspase-3 (277 aa).

Met1 is modified (N-acetylmethionine). Propeptides lie at residues 1-9 and 10-28; these read MENSENSVD and AKSI…KSMD. Residue Lys11 is modified to N6-acetyllysine. At Ser26 the chain carries Phosphoserine. Catalysis depends on residues His121 and Cys163. Cys163 is modified (S-nitrosocysteine; in inhibited form).

Belongs to the peptidase C14A family. In terms of assembly, heterotetramer that consists of two anti-parallel arranged heterodimers, each one formed by a 17 kDa (p17) and a 12 kDa (p12) subunit. Interacts with BIRC6/bruce. In terms of processing, cleavage by granzyme B, caspase-6, caspase-8 and caspase-10 generates the two active subunits. Additional processing of the propeptides is likely due to the autocatalytic activity of the activated protease. Active heterodimers between the small subunit of caspase-7 protease and the large subunit of caspase-3 also occur and vice versa. S-nitrosylated on its catalytic site cysteine in unstimulated cell lines and denitrosylated upon activation of the Fas apoptotic pathway, associated with an increase in intracellular caspase activity. Fas therefore activates caspase-3 not only by inducing the cleavage of the caspase zymogen to its active subunits, but also by stimulating the denitrosylation of its active site thiol. Post-translationally, ubiquitinated by BIRC6; this activity is inhibited by DIABLO/SMAC.

The protein resides in the cytoplasm. It catalyses the reaction Strict requirement for an Asp residue at positions P1 and P4. It has a preferred cleavage sequence of Asp-Xaa-Xaa-Asp-|- with a hydrophobic amino-acid residue at P2 and a hydrophilic amino-acid residue at P3, although Val or Ala are also accepted at this position.. With respect to regulation, inhibited by BIRC6; following inhibition of BIRC6-caspase binding by DIABLO/SMAC, BIRC6 is subjected to caspase cleavage, leading to an increase in active caspases. Involved in the activation cascade of caspases responsible for apoptosis execution. At the onset of apoptosis, it proteolytically cleaves poly(ADP-ribose) polymerase PARP1 at a '216-Asp-|-Gly-217' bond. Cleaves and activates sterol regulatory element binding proteins (SREBPs) between the basic helix-loop-helix leucine zipper domain and the membrane attachment domain. Cleaves and activates caspase-6, -7 and -9 (CASP6, CASP7 and CASP9, respectively). Cleaves and inactivates interleukin-18 (IL18). Triggers cell adhesion in sympathetic neurons through RET cleavage. Cleaves IL-1 beta between an Asp and an Ala, releasing the mature cytokine which is involved in a variety of inflammatory processes. Cleaves and inhibits serine/threonine-protein kinase AKT1 in response to oxidative stress. Acts as an inhibitor of type I interferon production during virus-induced apoptosis by mediating cleavage of antiviral proteins CGAS, IRF3 and MAVS, thereby preventing cytokine overproduction. Also involved in pyroptosis by mediating cleavage and activation of gasdermin-E (GSDME). Cleaves XRCC4 and phospholipid scramblase proteins XKR4, XKR8 and XKR9, leading to promote phosphatidylserine exposure on apoptotic cell surface. Cleaves BIRC6 following inhibition of BIRC6-caspase binding by DIABLO/SMAC. The chain is Caspase-3 (CASP3) from Felis catus (Cat).